We begin with the raw amino-acid sequence, 289 residues long: Eukaryotic translation initiation factor 3 subunit F (289 aa).

An MPN domain is found at 7-137 (VKVHPVVLFQ…LRAYVCVPLG (131 aa)).

This sequence belongs to the eIF-3 subunit F family. In terms of assembly, component of the eukaryotic translation initiation factor 3 (eIF-3) complex.

Its subcellular location is the cytoplasm. Functionally, component of the eukaryotic translation initiation factor 3 (eIF-3) complex, which is involved in protein synthesis of a specialized repertoire of mRNAs and, together with other initiation factors, stimulates binding of mRNA and methionyl-tRNAi to the 40S ribosome. The eIF-3 complex specifically targets and initiates translation of a subset of mRNAs involved in cell proliferation. The protein is Eukaryotic translation initiation factor 3 subunit F of Bombyx mori (Silk moth).